A 360-amino-acid polypeptide reads, in one-letter code: DNA replication and repair protein RecF (360 aa).

Position 30–37 (30–37 (GHNGSGKT)) interacts with ATP.

Belongs to the RecF family.

The protein localises to the cytoplasm. Its function is as follows. The RecF protein is involved in DNA metabolism; it is required for DNA replication and normal SOS inducibility. RecF binds preferentially to single-stranded, linear DNA. It also seems to bind ATP. This is DNA replication and repair protein RecF from Shewanella sediminis (strain HAW-EB3).